The chain runs to 160 residues: Major pollen allergen Bet v 1-J (160 aa).

The brassinolide site is built by Lys55, Tyr82, Tyr84, and Asn101. Hydrophobic ligand pocket stretches follow at residues 116–118 (KIN) and 133–141 (QIKASKEMG).

Belongs to the BetVI family. Pollen.

The protein localises to the cytoplasm. Its function is as follows. May be a general steroid carrier protein. The protein is Major pollen allergen Bet v 1-J of Betula pendula (European white birch).